We begin with the raw amino-acid sequence, 100 residues long: Large ribosomal subunit protein uL23 (100 aa).

It belongs to the universal ribosomal protein uL23 family. Part of the 50S ribosomal subunit. Contacts protein L29, and trigger factor when it is bound to the ribosome.

One of the early assembly proteins it binds 23S rRNA. One of the proteins that surrounds the polypeptide exit tunnel on the outside of the ribosome. Forms the main docking site for trigger factor binding to the ribosome. This Thermotoga maritima (strain ATCC 43589 / DSM 3109 / JCM 10099 / NBRC 100826 / MSB8) protein is Large ribosomal subunit protein uL23.